The chain runs to 953 residues: Catenin alpha-2 (953 aa).

T632 bears the Phosphothreonine mark. A phosphoserine mark is found at S640, S651, and S901. The segment covering 912 to 927 (EKKPLVKREKPEEFQT) has biased composition (basic and acidic residues). The interval 912–939 (EKKPLVKREKPEEFQTRVRRGSQKKHIS) is disordered. Basic residues predominate over residues 928–938 (RVRRGSQKKHI). Phosphoserine is present on S939.

This sequence belongs to the vinculin/alpha-catenin family. Interacts with CDH1 and CDH2. Interacts with ZNF639; recruits CTNNA2 to the nucleus. Interacts with F-actin. As to expression, expressed almost exclusively in the nervous system.

The protein localises to the cell membrane. It is found in the cytoplasm. Its subcellular location is the cytoskeleton. The protein resides in the cell junction. It localises to the adherens junction. The protein localises to the cell projection. It is found in the axon. Its subcellular location is the nucleus. Its function is as follows. May function as a linker between cadherin adhesion receptors and the cytoskeleton to regulate cell-cell adhesion and differentiation in the nervous system. Required for proper regulation of cortical neuronal migration and neurite growth. It acts as a negative regulator of Arp2/3 complex activity and Arp2/3-mediated actin polymerization. It thereby suppresses excessive actin branching which would impair neurite growth and stability. Regulates morphological plasticity of synapses and cerebellar and hippocampal lamination during development. Functions in the control of startle modulation. This Mus musculus (Mouse) protein is Catenin alpha-2 (Ctnna2).